We begin with the raw amino-acid sequence, 192 residues long: Imidazoleglycerol-phosphate dehydratase (192 aa).

Belongs to the imidazoleglycerol-phosphate dehydratase family.

The protein resides in the cytoplasm. The enzyme catalyses D-erythro-1-(imidazol-4-yl)glycerol 3-phosphate = 3-(imidazol-4-yl)-2-oxopropyl phosphate + H2O. Its pathway is amino-acid biosynthesis; L-histidine biosynthesis; L-histidine from 5-phospho-alpha-D-ribose 1-diphosphate: step 6/9. This chain is Imidazoleglycerol-phosphate dehydratase, found in Carboxydothermus hydrogenoformans (strain ATCC BAA-161 / DSM 6008 / Z-2901).